A 135-amino-acid chain; its full sequence is MSLYEHVFIARQDLSNAQAEGLIEHFSTVLADNGGKVVDREYWGVKTMAYKINKNRKGHYAFLKSDAPSAAVQEMERLMRLHDDVMRVLTIKVDKHAEGPSIQMQKRDERERGDRGDRSDRGDRGDRGDRGGFRR.

The interval 96–135 (HAEGPSIQMQKRDERERGDRGDRSDRGDRGDRGDRGGFRR) is disordered. Basic and acidic residues predominate over residues 105 to 135 (QKRDERERGDRGDRSDRGDRGDRGDRGGFRR).

The protein belongs to the bacterial ribosomal protein bS6 family.

In terms of biological role, binds together with bS18 to 16S ribosomal RNA. The chain is Small ribosomal subunit protein bS6 from Cereibacter sphaeroides (strain ATCC 17029 / ATH 2.4.9) (Rhodobacter sphaeroides).